The chain runs to 226 residues: DELTA-thalatoxin-Avl1b (226 aa).

An N-terminal signal peptide occupies residues 1–21 (MRHFVVFLYMFLALSIPTAFA). Residues 22–45 (KKHIVTKKGNHQDITNDNEGENAE) constitute a propeptide that is removed on maturation. The interval 50–59 (AVAGAVIAGG) is plays an important role in the hemolytic activity. The interval 58–77 (GGELALKILTKILDEIGKID) is N-terminal region. 6 residues coordinate phosphocholine: Ser101, Val134, Ser152, Pro154, Tyr180, and Tyr184. A trp-rich region, which is important for the binding to lipid membrane region spans residues 152–167 (SVPFDYNLYTNWWNVK). The short motif at 191–193 (KPS) is the Cell attachment site, crucial for protein stability element.

It belongs to the actinoporin family. Sea anemone subfamily. Octamer or nonamer in membranes. Monomer in the soluble state.

The protein resides in the secreted. It is found in the nematocyst. The protein localises to the target cell membrane. Its function is as follows. Pore-forming protein that forms cations-selective hydrophilic pores of around 1 nm and causes cytolysis. Pore formation is a multi-step process that involves specific recognition of membrane sphingomyelin (but neither cholesterol nor phosphatidylcholine) using aromatic rich region and adjacent phosphocholine (POC) binding site, firm binding to the membrane (mainly driven by hydrophobic interactions) accompanied by the transfer of the N-terminal region to the lipid-water interface and finally pore formation after oligomerization of monomers. This is DELTA-thalatoxin-Avl1b from Actineria villosa (Okinawan sea anemone).